We begin with the raw amino-acid sequence, 630 residues long: tRNA uridine 5-carboxymethylaminomethyl modification enzyme MnmG (630 aa).

13-18 (GGGHAG) is an FAD binding site. 273-287 (GPRYCPSIEDKIHRF) serves as a coordination point for NAD(+).

Belongs to the MnmG family. In terms of assembly, homodimer. Heterotetramer of two MnmE and two MnmG subunits. FAD serves as cofactor.

It is found in the cytoplasm. NAD-binding protein involved in the addition of a carboxymethylaminomethyl (cmnm) group at the wobble position (U34) of certain tRNAs, forming tRNA-cmnm(5)s(2)U34. This Pseudomonas putida (strain GB-1) protein is tRNA uridine 5-carboxymethylaminomethyl modification enzyme MnmG.